The sequence spans 750 residues: Amyloid-beta A4 precursor protein-binding family A member 2 (750 aa).

Disordered stretches follow at residues M1 to E94 and D143 to T346. S11 carries the phosphoserine modification. Residues G70 to T80 are compositionally biased toward polar residues. The segment covering S81 to E94 has biased composition (acidic residues). The segment at H185–T271 is STXBP1-binding. S209 carries the phosphoserine modification. The span at D219 to D228 shows a compositional bias: acidic residues. 2 stretches are compositionally biased toward polar residues: residues L238 to E248 and S332 to P344. The 190-residue stretch at L367–D556 folds into the PID domain. PDZ domains lie at E569–S654 and T660–A736.

As to quaternary structure, part of a multimeric complex containing STXBP1 and syntaxin-1. Binds to the cytoplasmic domain of amyloid-beta protein, and to the nuclear factor NF-kappa-B/p65 via its PDZ domain. Interacts with the N-terminal domain of NECAB3. In terms of tissue distribution, specifically expressed in neurons, predominantly of the cerebellum, hippocampus, and spinal cord. Lesser extent in neurons of the cerebral cortex and anterior thalmic nuclei.

Putative function in synaptic vesicle exocytosis by binding to STXBP1, an essential component of the synaptic vesicle exocytotic machinery. May modulate processing of the amyloid-beta precursor protein (APP) and hence formation of APP-beta. This is Amyloid-beta A4 precursor protein-binding family A member 2 (Apba2) from Mus musculus (Mouse).